Reading from the N-terminus, the 120-residue chain is MISKIDKNKVRLKRHARVRSNLSGTAQKPRLNVYRSNKHIYAQIIDDTKGVTLVQASTQDKDFENETGSKVELSSKVGEAIAKKAADKGITEIVFDRGGYLYHGRVKALADAARENGLQF.

The protein belongs to the universal ribosomal protein uL18 family. Part of the 50S ribosomal subunit; part of the 5S rRNA/L5/L18/L25 subcomplex. Contacts the 5S and 23S rRNAs.

Functionally, this is one of the proteins that bind and probably mediate the attachment of the 5S RNA into the large ribosomal subunit, where it forms part of the central protuberance. The protein is Large ribosomal subunit protein uL18 of Staphylococcus carnosus (strain TM300).